The primary structure comprises 211 residues: Large ribosomal subunit protein uL3 (211 aa).

Positions 122-157 (NQKRNNFGRGPMSHGSKNHRAPGSIGAGTTPGRVYP) are disordered.

This sequence belongs to the universal ribosomal protein uL3 family. Part of the 50S ribosomal subunit. Forms a cluster with proteins L14 and L19.

One of the primary rRNA binding proteins, it binds directly near the 3'-end of the 23S rRNA, where it nucleates assembly of the 50S subunit. In Trichormus variabilis (strain ATCC 29413 / PCC 7937) (Anabaena variabilis), this protein is Large ribosomal subunit protein uL3.